The primary structure comprises 353 residues: MDQMLSPNFSIPSIGTPLHQMEADQQIVANPVYHPPAVSQPDSLMPAPGSSSVQHQQQQQQSDASGGSGLFGHEPSLPLAHKQMQSYQPSASYQQQQQQQQLQSQAPGGGGSTPQSMMQPQTPQSMMAHMMPMSERSVGGSGAGGGGDALSNIHQTMGPSTPMTPATPGSADPGIVPQLQNIVSTVNLCCKLDLKKIALHARNAEYNPKRFAAVIMRIREPRTTALIFSSGKMVCTGAKSEDDSRLAARKYARIIQKLGFPAKFLDFKIQNMVGSCDVKFPIRLEGLVLTHCNFSSYEPELFPGLIYRMVRPRIVLLIFVSGKVVLTGAKVRQEIYDAFDKIFPILKKFKKQS.

Positions 20-121 are disordered; sequence QMEADQQIVA…STPQSMMQPQ (102 aa). 2 stretches are compositionally biased toward low complexity: residues 49–65 and 85–106; these read GSSS…SDAS and QSYQ…QSQA. Tandem repeats lie at residues 179 to 255 and 269 to 346.

The protein belongs to the TBP family. Belongs to the TFIID complex which is composed of TATA binding protein (Tbp) and a number of TBP-associated factors (Tafs). Binds DNA as monomer. Interacts with TFIIA-L heterotrimer. Interacts with Taf1, Taf2, Taf5 and Taf12.

It is found in the nucleus. Its function is as follows. General transcription factor that functions at the core of the DNA-binding multiprotein factor TFIID. Binding of TFIID to the TATA box is the initial transcriptional step of the pre-initiation complex (PIC), playing a role in the activation of eukaryotic genes transcribed by RNA polymerase II. The polypeptide is TATA-box-binding protein (Tbp) (Drosophila melanogaster (Fruit fly)).